The sequence spans 815 residues: MDEVSTVNENENRKTMIEPKKLNKRKREPTAIENLTSEEKESQISSLNLEMKGLFDYFREVMDKSKRTDLFSGFSECSSLNSMVALLMEEMSLPLSKLVDEIYLKLKEKTESVTMVAVKSAVVSVGQRVSYGVLNVDADVLEDDSESCLWCWETRDLKIMPSSVRGVLKLRRTCRKKIHERITAVSAMLAALQREETEKLWRSDLSKAAEKLGKILSEVDIRSFMDNMMQKNSSEMAEKDSKREEKLLLKQLEKNRCEAEKEKKRMERQVLKEKLQQEKEQKLLQKAIVDENNKEKEETESRKRIKKQQDESEKEQKRREKEQAELKKQLQVQKQASIMERFLKKSKDSSLTQPKLPSSEVTAQELSCTKHENEIGKVVQAIDNAFSTTCEATVDDIRREHFASWRQLGHLLSSSKKHWGMRRQPKSELFPKLKLSTNSGVTSDGEPNMEKQGDGCEENNFDGRQCKPSSSNRKKSRRVKQLLQFDKSCRPGFYGIWPSQSQVVKPRRPLQKDPELDYEVDSDEEWEEEEAGESLSDCEKDEDESLEEGCSKADDEDDSEDDFMVPDGYLSEDEGVQVDRMDIDPSEQDANTTSSKQDQESPEFCALLQQQKHLQNLTDHALKKTQPLIICNLTHEKVSLLAAKDLEGTQKVEQICLRALMVRQFPWSSLIEISINDIQDEDQEASKFSCSQSTPPSNSKAKIIPDSDLLTVVSTIQSCSQGINRVVETLQQKFPDVPKTKLRQKVREISDFEDSRWQVKKEVLTKLGLSPSPDKGGKRLPKTISTFFSKRCLPPSTKPQPAVEDAAERLENENA.

Disordered regions lie at residues 1 to 39 (MDEVSTVNENENRKTMIEPKKLNKRKREPTAIENLTSEE), 292 to 330 (NNKEKEETESRKRIKKQQDESEKEQKRREKEQAELKKQL), 434 to 477 (KLST…KKSR), 502 to 577 (QVVK…EGVQ), and 791 to 815 (RCLPPSTKPQPAVEDAAERLENENA). Basic and acidic residues-rich tracts occupy residues 10–21 (NENRKTMIEPKK) and 292–328 (NNKEKEETESRKRIKKQQDESEKEQKRREKEQAELKK). Positions 244–336 (EEKLLLKQLE…KKQLQVQKQA (93 aa)) form a coiled coil. 2 stretches are compositionally biased toward acidic residues: residues 516 to 532 (LDYEVDSDEEWEEEEAG) and 554 to 576 (DDEDDSEDDFMVPDGYLSEDEGV). The span at 806-815 (AAERLENENA) shows a compositional bias: basic and acidic residues.

Belongs to the CHAF1A family. In terms of assembly, component of the chromatin assembly factor 1 (CAF-1) complex, composed of FAS1, FAS2 and MSI1. Interacts with CYP71. In terms of tissue distribution, expressed in the shoot apical meristem, young leaf primordia, root tip and first lateral root primordium at the hypocotyl/root junction.

Its subcellular location is the nucleus. Functionally, component of the chromatin assembly factor complex (CAF-1) involved in chromatin assembly following DNA replication and DNA repair. Assembles histone octamers onto replicating DNA in vitro. Required for several aspects of development, including seedling growth and leaf hair differentiation. Plays a critical role in the organization of shoot apical meristem (SAM) and root apical meristem (RAM) during postembryonic development by facilitating stable maintenance of gene expression states. Seems not required to maintain transcriptional repression of heterochromatic genes. Involved in heterologous recombination. May repress endocycle. In Arabidopsis thaliana (Mouse-ear cress), this protein is Chromatin assembly factor 1 subunit FAS1 (FAS1).